Here is a 457-residue protein sequence, read N- to C-terminus: Siroheme synthase (457 aa).

The tract at residues 1–204 is precorrin-2 dehydrogenase /sirohydrochlorin ferrochelatase; that stretch reads MDHLPIFCQL…NDQKAITETT (204 aa). NAD(+) contacts are provided by residues 22 to 23 and 43 to 44; these read DV and LA. A Phosphoserine modification is found at Ser128. Residues 216–457 are uroporphyrinogen-III C-methyltransferase; it reads GEVVLVGAGP…RDKLNWFSNH (242 aa). Pro225 provides a ligand contact to S-adenosyl-L-methionine. Catalysis depends on Asp248, which acts as the Proton acceptor. Catalysis depends on Lys270, which acts as the Proton donor. S-adenosyl-L-methionine contacts are provided by residues 301-303, Ile306, 331-332, Met382, and Gly411; these read GGD and TA.

It in the N-terminal section; belongs to the precorrin-2 dehydrogenase / sirohydrochlorin ferrochelatase family. In the C-terminal section; belongs to the precorrin methyltransferase family.

The catalysed reaction is uroporphyrinogen III + 2 S-adenosyl-L-methionine = precorrin-2 + 2 S-adenosyl-L-homocysteine + H(+). It carries out the reaction precorrin-2 + NAD(+) = sirohydrochlorin + NADH + 2 H(+). The enzyme catalyses siroheme + 2 H(+) = sirohydrochlorin + Fe(2+). It participates in cofactor biosynthesis; adenosylcobalamin biosynthesis; precorrin-2 from uroporphyrinogen III: step 1/1. Its pathway is cofactor biosynthesis; adenosylcobalamin biosynthesis; sirohydrochlorin from precorrin-2: step 1/1. The protein operates within porphyrin-containing compound metabolism; siroheme biosynthesis; precorrin-2 from uroporphyrinogen III: step 1/1. It functions in the pathway porphyrin-containing compound metabolism; siroheme biosynthesis; siroheme from sirohydrochlorin: step 1/1. It participates in porphyrin-containing compound metabolism; siroheme biosynthesis; sirohydrochlorin from precorrin-2: step 1/1. Functionally, multifunctional enzyme that catalyzes the SAM-dependent methylations of uroporphyrinogen III at position C-2 and C-7 to form precorrin-2 via precorrin-1. Then it catalyzes the NAD-dependent ring dehydrogenation of precorrin-2 to yield sirohydrochlorin. Finally, it catalyzes the ferrochelation of sirohydrochlorin to yield siroheme. In Escherichia coli O157:H7 (strain EC4115 / EHEC), this protein is Siroheme synthase.